The primary structure comprises 74 residues: Anionic peptide clone 10 (74 aa).

A signal peptide spans 1-24; the sequence is MVSKSLIVLLLVSVLVSTFFTTEA.

It belongs to the non-disulfide-bridged peptide (NDBP) superfamily. Long chain multifunctional peptide (group 2) family. As to expression, expressed by the venom gland.

It localises to the secreted. May be an antimicrobial peptide. The polypeptide is Anionic peptide clone 10 (Tityus costatus (Brazilian scorpion)).